The following is a 127-amino-acid chain: Large ribosomal subunit protein bL17 (127 aa).

Belongs to the bacterial ribosomal protein bL17 family. Part of the 50S ribosomal subunit. Contacts protein L32.

The protein is Large ribosomal subunit protein bL17 of Legionella pneumophila (strain Paris).